A 70-amino-acid polypeptide reads, in one-letter code: uncharacterized protein (70 aa).

2 helical membrane-spanning segments follow: residues 13-33 (YYAF…LLGF) and 39-59 (QTYA…GLII).

Its subcellular location is the cell membrane. This is an uncharacterized protein from Escherichia coli O6:H1 (strain CFT073 / ATCC 700928 / UPEC).